Reading from the N-terminus, the 668-residue chain is Protein brown (668 aa).

At 1-412 (MPMDEGDAQG…TEDLANIRSG (412 aa)) the chain is on the cytoplasmic side. The 298-residue stretch at 31-328 (YSFWNECRKQ…FTEGFMQPKN (298 aa)) folds into the ABC transporter domain. Residue 63–70 (GGSGAGKT) coordinates ATP. A helical transmembrane segment spans residues 413–433 (LIGFGFFMTTAVTLSLMYSGV). The Extracellular segment spans residues 434 to 453 (GGLTQRTVQDVGGSIFMLSN). Residues 454–474 (EMIFTFSYGVTYIFPAALPII) form a helical membrane-spanning segment. Residues 475-490 (RREVAEGTYSLSAYYV) are Cytoplasmic-facing. A helical membrane pass occupies residues 491 to 511 (ALVLSFVPVAFFKGYMFLSVI). Over 512-524 (YASIYYTRGFLLY) the chain is Extracellular. The chain crosses the membrane as a helical span at residues 525-545 (ITMGFLMSLSAIAAVGYGVFL). Residues 546-561 (SSLFETDKMASECAAP) lie on the Cytoplasmic side of the membrane. Residues 562-582 (FDLIFLIFGGTYMNVDSVPLL) traverse the membrane as a helical segment. The Extracellular portion of the chain corresponds to 583 to 637 (KYFSLFFYSNEALMYNFWIDIDNIACXVNDEHPCCQTGLEVLQQASFRTADYTFW). Residues 638 to 658 (LDCASLLVVALVFHIVSFTLI) form a helical membrane-spanning segment. Residues 659–668 (RRYINRSGYY) lie on the Cytoplasmic side of the membrane.

Belongs to the ABC transporter superfamily. ABCG family. Eye pigment precursor importer (TC 3.A.1.204) subfamily. In terms of assembly, may form a heterodimer with w/white. Expressed in eyes.

It localises to the membrane. It carries out the reaction guanine(out) + ATP + H2O = guanine(in) + ADP + phosphate + H(+). The catalysed reaction is riboflavin(in) + ATP + H2O = riboflavin(out) + ADP + phosphate + H(+). It catalyses the reaction (6S)-5,6,7,8-tetrahydrofolate(out) + ATP + H2O = (6S)-5,6,7,8-tetrahydrofolate(in) + ADP + phosphate + H(+). In terms of biological role, ATP-dependent transporter of the ATP-binding cassette (ABC) family which transports various molecules including bioamines, neurotransmitters and metabolic intermediates. In the eye and probably in association with w/white, required for the transport of the eye red pigment precursor, guanine, into pigment cell granules. In Malpighian tubules, involved in guanine uptake. Probably in association with w/white, involved in aging-induced intestinal stem cell proliferation in the midgut by regulating tetrahydrofolate transport. In Drosophila virilis (Fruit fly), this protein is Protein brown.